We begin with the raw amino-acid sequence, 316 residues long: Beta-ketoacyl-[acyl-carrier-protein] synthase III (316 aa).

Catalysis depends on residues C112 and H243. The ACP-binding stretch occupies residues 244–248; it reads QANLR. N273 is an active-site residue.

This sequence belongs to the thiolase-like superfamily. FabH family. In terms of assembly, homodimer.

Its subcellular location is the cytoplasm. The enzyme catalyses malonyl-[ACP] + acetyl-CoA + H(+) = 3-oxobutanoyl-[ACP] + CO2 + CoA. It participates in lipid metabolism; fatty acid biosynthesis. Catalyzes the condensation reaction of fatty acid synthesis by the addition to an acyl acceptor of two carbons from malonyl-ACP. Catalyzes the first condensation reaction which initiates fatty acid synthesis and may therefore play a role in governing the total rate of fatty acid production. Possesses both acetoacetyl-ACP synthase and acetyl transacylase activities. Its substrate specificity determines the biosynthesis of branched-chain and/or straight-chain of fatty acids. This is Beta-ketoacyl-[acyl-carrier-protein] synthase III from Yersinia pestis (strain Pestoides F).